Consider the following 553-residue polypeptide: Terpene synthase 16 (553 aa).

Mg(2+)-binding residues include Asp-303, Asp-307, and Glu-457. Residues 303–307 (DDTYD) carry the DDXXD motif motif.

Belongs to the terpene synthase family. Tpsa subfamily. Mg(2+) serves as cofactor. Mn(2+) is required as a cofactor. Expressed in leaves, trichomes and flowers.

The protein operates within secondary metabolite biosynthesis; terpenoid biosynthesis. Functionally, sesquiterpene synthase involved in the biosynthesis of volatile compounds. No activity detected with geranyl diphosphate (GPP) and farnesyl diphosphate (FPP) as substrates. The chain is Terpene synthase 16 from Solanum lycopersicum (Tomato).